Here is an 880-residue protein sequence, read N- to C-terminus: Interference hedgehog (880 aa).

An N-terminal signal peptide occupies residues 1–20 (MTLLTSSLLLFSLLTSRLEA). Residues 21 to 703 (IPVLEKSPAH…ETFNMSPMLT (683 aa)) lie on the Extracellular side of the membrane. Ig-like C2-type domains lie at 45 to 142 (PGVR…TARL), 155 to 232 (PESP…ERIQ), 252 to 340 (PHLL…YIKV), and 346 to 432 (PQIV…LQVN). 4 disulfide bridges follow: Cys-68–Cys-126, Cys-173–Cys-220, Cys-276–Cys-324, and Cys-367–Cys-414. Residues Asn-102 and Asn-209 are each glycosylated (N-linked (GlcNAc...) asparagine). Positions 429–467 (LQVNPKQIQEPRESGGTHRPNPNQGSKHKQMYPPTPPNV) are disordered. 2 Fibronectin type-III domains span residues 461-567 (PPTP…LQPG) and 575-670 (VPEL…TQRP). Residue Asn-466 is glycosylated (N-linked (GlcNAc...) asparagine). Residues Arg-497, Lys-501, Lys-503, and Arg-541 each contribute to the heparin site. N-linked (GlcNAc...) asparagine glycosylation is present at Asn-557. Positions 662–692 (LKQGRTQRPKTSTTEEPTLQMGDRDTTTPSH) are disordered. A compositionally biased stretch (polar residues) spans 665 to 678 (GRTQRPKTSTTEEP). A glycan (N-linked (GlcNAc...) asparagine) is linked at Asn-693. The helical transmembrane segment at 704 to 724 (GTIGGGAVLILLLISTCLCVC) threads the bilayer. Topologically, residues 725 to 880 (RRRNSRSRGN…SSGSLNSVGV (156 aa)) are cytoplasmic. Disordered regions lie at residues 728–762 (NSRSRGNNPNKPRMAELRDDFVPLGNCSPTKQRQR) and 775–880 (QQQQ…SVGV). Low complexity-rich tracts occupy residues 823 to 837 (RAGGSNGSNNGNNNN) and 864 to 880 (SSRSENLSSGSLNSVGV).

This sequence belongs to the immunoglobulin superfamily. IHOG family. In terms of assembly, homodimer. Heterotetramer; 2 iHog chains bind 2 hh chains when facilitated by heparin, heparin is required to promote high-affinity interactions between hh and iHog.

The protein resides in the membrane. In terms of biological role, mediates response to the active Hedgehog (Hh) protein signal in embryos, functioning upstream or at the level of patched (ptc). This chain is Interference hedgehog, found in Drosophila simulans (Fruit fly).